We begin with the raw amino-acid sequence, 380 residues long: Cytochrome b (380 aa).

The next 4 helical transmembrane spans lie at 33–53 (FGSLLGLCLATQILTGLFLAM), 77–98 (WLIRNIHANGASFFFICIYMHI), 113–133 (WNIGVVLLLLTMMTAFVGYVL), and 178–198 (FFAFHFLFPFVIAAATVLHLL). Positions 83 and 97 each coordinate heme b. Positions 182 and 196 each coordinate heme b. Histidine 201 contributes to the a ubiquinone binding site. The next 4 membrane-spanning stretches (helical) occupy residues 226-246 (YKDLLGFVAMLLGLTSLALFA), 288-308 (LGGVLALLFSILVLMVVPILH), 320-340 (LTQFLFWTLVADMLILTWIGG), and 347-367 (FIIIGQVASVIYFTIFLVLAP).

It belongs to the cytochrome b family. As to quaternary structure, the cytochrome bc1 complex contains 3 respiratory subunits (MT-CYB, CYC1 and UQCRFS1), 2 core proteins (UQCRC1 and UQCRC2) and probably 6 low-molecular weight proteins. Heme b serves as cofactor.

It is found in the mitochondrion inner membrane. Component of the ubiquinol-cytochrome c reductase complex (complex III or cytochrome b-c1 complex) that is part of the mitochondrial respiratory chain. The b-c1 complex mediates electron transfer from ubiquinol to cytochrome c. Contributes to the generation of a proton gradient across the mitochondrial membrane that is then used for ATP synthesis. In Salmo trutta (Brown trout), this protein is Cytochrome b (mt-cyb).